The following is a 581-amino-acid chain: Serine/threonine protein phosphatase 2A 55 kDa regulatory subunit B alpha isoform (581 aa).

A disordered region spans residues 1-27; the sequence is MMNPDGGDGDRLEAAGAGSSSAQQGHP. Residues 14 to 25 show a composition bias toward low complexity; the sequence is AAGAGSSSAQQG. WD repeat units lie at residues 47-86 and 123-164; these read QEVDIISAIEFDKSGDHLATGDRGGRVVLFERTDARDNAS and EIEE…VKQV. A compositionally biased stretch (low complexity) spans 172 to 189; the sequence is RSVGTGTSSSASTSSSRG. The tract at residues 172–192 is disordered; that stretch reads RSVGTGTSSSASTSSSRGLLP. WD repeat units lie at residues 241–279, 290–330, 349–387, and 492–530; these read AHDYHINSISTNSDGETYISADDLRINLWNLEINNQSFN, DLTE…LCDN, EIIASISDIKFSRDGRYILSRDYMTLKLWDLNMDSGPVS, and DFSTKLLHLAWHPTENSIACAAANSLYMYYARRCLRKFI.

Belongs to the phosphatase 2A regulatory subunit B family. In terms of assembly, PP2A consists of a common heteromeric enzyme, composed of a catalytic subunit (subunits C), a constant regulatory subunit (subunit A), and a variety of regulatory subunits such as subunits B (the R2/B/PR55/B55, R3/B''/PR72/PR130/PR59 and R5/B'/B56 families).

The B regulatory subunit may modulate substrate selectivity and catalytic activity, and may also direct the localization of the catalytic enzyme to a particular subcellular compartment. This is Serine/threonine protein phosphatase 2A 55 kDa regulatory subunit B alpha isoform from Oryza sativa subsp. japonica (Rice).